Here is a 270-residue protein sequence, read N- to C-terminus: Phosphatidylglycerol--prolipoprotein diacylglyceryl transferase (270 aa).

4 helical membrane passes run 19 to 39, 56 to 76, 92 to 112, and 116 to 136; these read FPVY…LWLA, LVLI…VIFE, QGGL…ILFA, and GVSF…GQAI. Arg138 lines the a 1,2-diacyl-sn-glycero-3-phospho-(1'-sn-glycerol) pocket. 3 helical membrane passes run 178-198, 206-226, and 236-256; these read HPTF…LLAL, GELF…VEGL, and LRIA…FIIV.

This sequence belongs to the Lgt family.

It is found in the cell membrane. It carries out the reaction L-cysteinyl-[prolipoprotein] + a 1,2-diacyl-sn-glycero-3-phospho-(1'-sn-glycerol) = an S-1,2-diacyl-sn-glyceryl-L-cysteinyl-[prolipoprotein] + sn-glycerol 1-phosphate + H(+). It functions in the pathway protein modification; lipoprotein biosynthesis (diacylglyceryl transfer). Catalyzes the transfer of the diacylglyceryl group from phosphatidylglycerol to the sulfhydryl group of the N-terminal cysteine of a prolipoprotein, the first step in the formation of mature lipoproteins. The polypeptide is Phosphatidylglycerol--prolipoprotein diacylglyceryl transferase (Bacillus anthracis (strain A0248)).